The following is a 144-amino-acid chain: Large-conductance mechanosensitive channel (144 aa).

A run of 2 helical transmembrane segments spans residues 16–36 (VIDLAVGVIIGAAFGKIVDSV) and 86–106 (GNFLTIVVNFVILAFIIFMMV).

This sequence belongs to the MscL family. As to quaternary structure, homopentamer.

The protein localises to the cell inner membrane. Functionally, channel that opens in response to stretch forces in the membrane lipid bilayer. May participate in the regulation of osmotic pressure changes within the cell. In Cupriavidus metallidurans (strain ATCC 43123 / DSM 2839 / NBRC 102507 / CH34) (Ralstonia metallidurans), this protein is Large-conductance mechanosensitive channel.